The sequence spans 434 residues: MAMQKIFAREILDSRGNPTVEVDLHTAKGRFRAAVPSGASTGIYEALELRDGDKSRYLGKGVLKAVEHINKTLGPALLEKKLSVVDQEKVDKFMIELDGTENKSKFGANAILGVSLAVCKAGAAEKGVPLYRHIADLAGNPDLVLPVPAFNVINGGSHAGNKLAMQEFMILPVGASSFREAMRIGAEVYHHLKGVIKGKYGKDATNVGDEGGFAPNILENNEALELLKTAIQAAGYPDKVVIGMDVAASEFYRNGKYDLDFKSPDDPSRHITGEKLGELYKSFIKNYPVVSIEDPFDQDDWKTWTSFLSGVNIQIVGDDLTVTNLKRIAQAVEKKACNCLLLKVNQIGSVTESIQACKLAQSNGWGVMVSHRSGETEDTFIADLVVGLCTGQIKTGAPCRSERLAKYNQLMRIEEALGDKAVFAGRKFRNPKAK.

Position 2 is an N-acetylalanine (A2). T72 is modified (phosphothreonine). Phosphoserine is present on residues S83 and S157. The substrate site is built by H158 and E167. Residue S176 is modified to Phosphoserine. Residue T205 is modified to Phosphothreonine. The Proton donor role is filled by E210. T229 bears the Phosphothreonine mark. Y236 is subject to Phosphotyrosine. Residue D245 coordinates Mg(2+). The residue at position 263 (S263) is a Phosphoserine. Residues E293 and D318 each contribute to the substrate site. The Mg(2+) site is built by E293 and D318. Catalysis depends on K343, which acts as the Proton acceptor. Substrate-binding positions include 370 to 373 and K394; that span reads SHRS.

Belongs to the enolase family. As to quaternary structure, mammalian enolase is composed of 3 isozyme subunits, alpha, beta and gamma, which can form homodimers or heterodimers which are cell-type and development-specific. Interacts with PNKD. Requires Mg(2+) as cofactor.

Its subcellular location is the cytoplasm. The catalysed reaction is (2R)-2-phosphoglycerate = phosphoenolpyruvate + H2O. It functions in the pathway carbohydrate degradation; glycolysis; pyruvate from D-glyceraldehyde 3-phosphate: step 4/5. In terms of biological role, glycolytic enzyme that catalyzes the conversion of 2-phosphoglycerate to phosphoenolpyruvate. Appears to have a function in striated muscle development and regeneration. The polypeptide is Beta-enolase (ENO3) (Sus scrofa (Pig)).